Here is a 1624-residue protein sequence, read N- to C-terminus: NAD-specific glutamate dehydrogenase (1624 aa).

The active site involves K845.

Belongs to the Glu/Leu/Phe/Val dehydrogenases family. As to quaternary structure, interacts with (unphosphorylated) GarA.

It catalyses the reaction L-glutamate + NAD(+) + H2O = 2-oxoglutarate + NH4(+) + NADH + H(+). Activity is inhibited by unphosphorylated GarA. Its function is as follows. Catalyzes the reversible conversion of L-glutamate to 2-oxoglutarate. In Mycobacterium tuberculosis (strain ATCC 25618 / H37Rv), this protein is NAD-specific glutamate dehydrogenase (gdh).